We begin with the raw amino-acid sequence, 714 residues long: Ribonucleoside-diphosphate reductase 2 subunit alpha (714 aa).

Substrate contacts are provided by residues threonine 161, 177–178 (SC), glycine 206, 386–390 (NLCSE), and 588–592 (PTGSI). Cysteine 178 and cysteine 415 form a disulfide bridge. Asparagine 386 serves as the catalytic Proton acceptor. Cysteine 388 (cysteine radical intermediate) is an active-site residue. Glutamate 390 serves as the catalytic Proton acceptor.

It belongs to the ribonucleoside diphosphate reductase large chain family. Tetramer of two alpha and two beta subunits.

It carries out the reaction a 2'-deoxyribonucleoside 5'-diphosphate + [thioredoxin]-disulfide + H2O = a ribonucleoside 5'-diphosphate + [thioredoxin]-dithiol. Its activity is regulated as follows. Under complex allosteric control mediated by deoxynucleoside triphosphates and ATP binding. The type of nucleotide bound at the specificity site determines substrate preference. It seems probable that ATP makes the enzyme reduce CDP and UDP, dGTP favors ADP reduction and dTTP favors GDP reduction. Functionally, provides the precursors necessary for DNA synthesis. Catalyzes the biosynthesis of deoxyribonucleotides from the corresponding ribonucleotides. R1E contains the binding sites for both substrates and allosteric effectors and carries out the actual reduction of the ribonucleotide. The chain is Ribonucleoside-diphosphate reductase 2 subunit alpha (nrdE) from Escherichia coli (strain K12).